The primary structure comprises 341 residues: Eukaryotic translation initiation factor 2 subunit 1 (341 aa).

The 72-residue stretch at 16 to 87 (EDVVMVNVLS…EKGYIDLSKR (72 aa)) folds into the S1 motif domain. S51 carries the phosphoserine modification. The interval 293–341 (AENAQVAGDDDEEDGADQEGMQFDPEKEFNHKGSGAGRANEEDEEEEED) is disordered. Residues 300-309 (GDDDEEDGAD) are compositionally biased toward acidic residues.

Belongs to the eIF-2-alpha family. In terms of assembly, eukaryotic translation initiation factor 2 eIF2 is a heterotrimeric complex composed of an alpha, a beta and a gamma subunit. In terms of processing, phosphorylation of eIF-2-alpha impairs the recycling of eIF-2 between successive rounds of initiation and thus leads to inhibition of translation.

The protein resides in the cytoplasm. It is found in the cytosol. In terms of biological role, eIF-2 functions in the early steps of protein synthesis by forming a ternary complex with GTP and initiator tRNA. This pre-initiation complex mediates ribosomal recognition of a start codon during the scanning process of the leader region. This Drosophila melanogaster (Fruit fly) protein is Eukaryotic translation initiation factor 2 subunit 1.